A 171-amino-acid chain; its full sequence is Galectin-related protein (171 aa).

The Galectin domain occupies 38-170; that stretch reads PFCGHIKGGM…INGDLQLTKL (133 aa).

Does not bind lactose, and may not bind carbohydrates. This Xenopus tropicalis (Western clawed frog) protein is Galectin-related protein (lgalsl).